A 1459-amino-acid chain; its full sequence is ARF guanine-nucleotide exchange factor 2 (1459 aa).

Residues serine 46 and serine 284 each carry the phosphoserine modification. The 145-residue stretch at 570 to 714 (FNEKPKKGIP…IIMLNTDLHN (145 aa)) folds into the SEC7 domain. The interval 1412–1459 (EKGNGSSSHGSAHEQTPESNDVEIEATAPIDDNTDDDNKPKLSDVEKD) is disordered. Residues 1447-1459 (DDNKPKLSDVEKD) show a composition bias toward basic and acidic residues.

Interacts (via SEC7 domain) with DRS2 (via C-terminus); the interaction is direct. Interacts with GMH1.

The protein resides in the cytoplasm. It localises to the cytosol. Its subcellular location is the membrane. The protein localises to the golgi apparatus membrane. Functionally, activates the ARF proteins by exchanging bound GDP for free GTP. Plays a role in maintaining mitochondrial morphology. Stimulates DRS2 flippase activity. The polypeptide is ARF guanine-nucleotide exchange factor 2 (GEA2) (Saccharomyces cerevisiae (strain ATCC 204508 / S288c) (Baker's yeast)).